The primary structure comprises 305 residues: tRNA pseudouridine synthase B (305 aa).

Aspartate 50 (nucleophile) is an active-site residue.

It belongs to the pseudouridine synthase TruB family. Type 1 subfamily.

It carries out the reaction uridine(55) in tRNA = pseudouridine(55) in tRNA. Responsible for synthesis of pseudouridine from uracil-55 in the psi GC loop of transfer RNAs. The protein is tRNA pseudouridine synthase B of Rhodococcus jostii (strain RHA1).